The primary structure comprises 208 residues: Small ribosomal subunit protein uS4B (208 aa).

Residues 95–160 (KRLDNVVFRL…NQVYMAAKQA (66 aa)) form the S4 RNA-binding domain.

It belongs to the universal ribosomal protein uS4 family. In terms of assembly, part of the 30S ribosomal subunit. Contacts protein S5. The interaction surface between S4 and S5 is involved in control of translational fidelity.

In terms of biological role, one of the primary rRNA binding proteins, it binds directly to 16S rRNA where it nucleates assembly of the body of the 30S subunit. With S5 and S12 plays an important role in translational accuracy. The sequence is that of Small ribosomal subunit protein uS4B from Bdellovibrio bacteriovorus (strain ATCC 15356 / DSM 50701 / NCIMB 9529 / HD100).